Reading from the N-terminus, the 242-residue chain is 4-hydroxy-tetrahydrodipicolinate reductase (242 aa).

Residues Gly-8–Met-13, Gly-75–Thr-77, and Ala-99–Met-102 contribute to the NAD(+) site. The active-site Proton donor/acceptor is the His-131. (S)-2,3,4,5-tetrahydrodipicolinate is bound at residue His-132. Lys-135 serves as the catalytic Proton donor. Gly-141–Thr-142 serves as a coordination point for (S)-2,3,4,5-tetrahydrodipicolinate.

Belongs to the DapB family.

The protein localises to the cytoplasm. It carries out the reaction (S)-2,3,4,5-tetrahydrodipicolinate + NAD(+) + H2O = (2S,4S)-4-hydroxy-2,3,4,5-tetrahydrodipicolinate + NADH + H(+). The enzyme catalyses (S)-2,3,4,5-tetrahydrodipicolinate + NADP(+) + H2O = (2S,4S)-4-hydroxy-2,3,4,5-tetrahydrodipicolinate + NADPH + H(+). The protein operates within amino-acid biosynthesis; L-lysine biosynthesis via DAP pathway; (S)-tetrahydrodipicolinate from L-aspartate: step 4/4. Its function is as follows. Catalyzes the conversion of 4-hydroxy-tetrahydrodipicolinate (HTPA) to tetrahydrodipicolinate. In Campylobacter jejuni subsp. jejuni serotype O:6 (strain 81116 / NCTC 11828), this protein is 4-hydroxy-tetrahydrodipicolinate reductase.